Reading from the N-terminus, the 190-residue chain is Putative CRISPR system CMR subunit Cmr7 2 (190 aa).

The protein belongs to the CRISPR system Cmr7 family. As to quaternary structure, homodimer.

CRISPR (clustered regularly interspaced short palindromic repeat) is an adaptive immune system that provides protection against mobile genetic elements (viruses, transposable elements and conjugative plasmids). CRISPR clusters contain spacers, sequences complementary to antecedent mobile elements, and target invading nucleic acids. CRISPR clusters are transcribed and processed into CRISPR RNA (crRNA). The sequence is that of Putative CRISPR system CMR subunit Cmr7 2 (cmr7b) from Saccharolobus solfataricus (strain ATCC 35092 / DSM 1617 / JCM 11322 / P2) (Sulfolobus solfataricus).